Consider the following 277-residue polypeptide: Large ribosomal subunit protein uL2 (277 aa).

Disordered stretches follow at residues 32–58 and 225–277; these read KSLT…RGGG and VAMN…RRNN.

It belongs to the universal ribosomal protein uL2 family. In terms of assembly, part of the 50S ribosomal subunit. Forms a bridge to the 30S subunit in the 70S ribosome.

One of the primary rRNA binding proteins. Required for association of the 30S and 50S subunits to form the 70S ribosome, for tRNA binding and peptide bond formation. It has been suggested to have peptidyltransferase activity; this is somewhat controversial. Makes several contacts with the 16S rRNA in the 70S ribosome. The sequence is that of Large ribosomal subunit protein uL2 from Borrelia recurrentis (strain A1).